Here is a 263-residue protein sequence, read N- to C-terminus: Putative S-adenosyl-L-methionine-dependent methyltransferase Mjls_0079 (263 aa).

S-adenosyl-L-methionine is bound by residues aspartate 121 and 150–151 (ES).

This sequence belongs to the UPF0677 family.

Its function is as follows. Exhibits S-adenosyl-L-methionine-dependent methyltransferase activity. The sequence is that of Putative S-adenosyl-L-methionine-dependent methyltransferase Mjls_0079 from Mycobacterium sp. (strain JLS).